The primary structure comprises 361 residues: 3-dehydroquinate synthase (361 aa).

Residues 71 to 76 (DGEQYK), 105 to 109 (GVIGD), 129 to 130 (TT), Lys142, and Lys151 each bind NAD(+). Residues Glu184, His247, and His264 each contribute to the Zn(2+) site.

The protein belongs to the sugar phosphate cyclases superfamily. Dehydroquinate synthase family. It depends on Co(2+) as a cofactor. The cofactor is Zn(2+). Requires NAD(+) as cofactor.

It localises to the cytoplasm. The enzyme catalyses 7-phospho-2-dehydro-3-deoxy-D-arabino-heptonate = 3-dehydroquinate + phosphate. It participates in metabolic intermediate biosynthesis; chorismate biosynthesis; chorismate from D-erythrose 4-phosphate and phosphoenolpyruvate: step 2/7. Catalyzes the conversion of 3-deoxy-D-arabino-heptulosonate 7-phosphate (DAHP) to dehydroquinate (DHQ). The protein is 3-dehydroquinate synthase of Pectobacterium atrosepticum (strain SCRI 1043 / ATCC BAA-672) (Erwinia carotovora subsp. atroseptica).